A 619-amino-acid polypeptide reads, in one-letter code: Dihydroxy-acid dehydratase 1 (619 aa).

Position 81 (Asp-81) interacts with Mg(2+). Cys-122 provides a ligand contact to [2Fe-2S] cluster. 2 residues coordinate Mg(2+): Asp-123 and Lys-124. Position 124 is an N6-carboxylysine (Lys-124). [2Fe-2S] cluster is bound at residue Cys-201. Residue Glu-496 coordinates Mg(2+). Ser-522 functions as the Proton acceptor in the catalytic mechanism.

Belongs to the IlvD/Edd family. In terms of assembly, homodimer. [2Fe-2S] cluster serves as cofactor. Requires Mg(2+) as cofactor.

It carries out the reaction (2R)-2,3-dihydroxy-3-methylbutanoate = 3-methyl-2-oxobutanoate + H2O. It catalyses the reaction (2R,3R)-2,3-dihydroxy-3-methylpentanoate = (S)-3-methyl-2-oxopentanoate + H2O. The protein operates within amino-acid biosynthesis; L-isoleucine biosynthesis; L-isoleucine from 2-oxobutanoate: step 3/4. Its pathway is amino-acid biosynthesis; L-valine biosynthesis; L-valine from pyruvate: step 3/4. Functionally, functions in the biosynthesis of branched-chain amino acids. Catalyzes the dehydration of (2R,3R)-2,3-dihydroxy-3-methylpentanoate (2,3-dihydroxy-3-methylvalerate) into 2-oxo-3-methylpentanoate (2-oxo-3-methylvalerate) and of (2R)-2,3-dihydroxy-3-methylbutanoate (2,3-dihydroxyisovalerate) into 2-oxo-3-methylbutanoate (2-oxoisovalerate), the penultimate precursor to L-isoleucine and L-valine, respectively. This chain is Dihydroxy-acid dehydratase 1, found in Burkholderia lata (strain ATCC 17760 / DSM 23089 / LMG 22485 / NCIMB 9086 / R18194 / 383).